The chain runs to 336 residues: C2H2 finger domain transcription factor mtfA (336 aa).

The interval 1-245 (MDVASLISPS…PSPGHQQMIS (245 aa)) is disordered. Polar residues-rich tracts occupy residues 7–29 (ISPS…SSAS) and 36–56 (EQST…YSRT). Over residues 136-149 (SPSTSSVSAASSSA) the composition is skewed to low complexity. Polar residues predominate over residues 168-181 (TDRSSISSQGSVQH). Residues 182 to 210 (AASAPYASPAPSVSSFSSPIEPSTPSTAA) show a composition bias toward low complexity. The span at 216–245 (PAPNTFQNPSPFPQTSTASLPSPGHQQMIS) shows a compositional bias: polar residues. C2H2-type zinc fingers lie at residues 272-294 (YICR…SHSH) and 300-325 (FRCT…RGCH).

Its subcellular location is the nucleus. Its function is as follows. Transcription factor that controls morphogenesis and virulence. Acts as a positive regulator of gliotixin and protease production. This chain is C2H2 finger domain transcription factor mtfA, found in Aspergillus fumigatus (strain CBS 144.89 / FGSC A1163 / CEA10) (Neosartorya fumigata).